The chain runs to 117 residues: Aspartate 1-decarboxylase (117 aa).

Residue Ser-25 is the Schiff-base intermediate with substrate; via pyruvic acid of the active site. The residue at position 25 (Ser-25) is a Pyruvic acid (Ser). Thr-57 serves as a coordination point for substrate. The active-site Proton donor is Tyr-58. 72–74 lines the substrate pocket; the sequence is GAA.

It belongs to the PanD family. As to quaternary structure, heterooctamer of four alpha and four beta subunits. Requires pyruvate as cofactor. Post-translationally, is synthesized initially as an inactive proenzyme, which is activated by self-cleavage at a specific serine bond to produce a beta-subunit with a hydroxyl group at its C-terminus and an alpha-subunit with a pyruvoyl group at its N-terminus.

It localises to the cytoplasm. The catalysed reaction is L-aspartate + H(+) = beta-alanine + CO2. It participates in cofactor biosynthesis; (R)-pantothenate biosynthesis; beta-alanine from L-aspartate: step 1/1. Catalyzes the pyruvoyl-dependent decarboxylation of aspartate to produce beta-alanine. In Helicobacter pylori (strain ATCC 700392 / 26695) (Campylobacter pylori), this protein is Aspartate 1-decarboxylase.